The sequence spans 766 residues: Protein zer-1 homolog (766 aa).

Ala2 carries the post-translational modification N-acetylalanine. LRR repeat units lie at residues Ser226 to Leu245, His246 to Arg268, and Leu278 to Glu302. 5 ARM repeats span residues Arg427–Ile467, Asp511–Asp556, Thr558–Glu600, Lys602–Phe643, and Pro714–Asn756.

This sequence belongs to the zyg-11 family. In terms of assembly, interacts with the ELOC-ELOB/Elongin BC complex. Part of an E3 ubiquitin ligase complex including ZER1, CUL2 and Elongin BC.

Functionally, serves as substrate adapter subunit in the E3 ubiquitin ligase complex ZYG11B-CUL2-Elongin BC. Acts redudantly with ZYG11B to target substrates bearing N-terminal glycine degrons for proteasomal degradation. Involved in the clearance of proteolytic fragments generated by caspase cleavage during apoptosis since N-terminal glycine degrons are strongly enriched at caspase cleavage sites. Also important in the quality control of protein N-myristoylation in which N-terminal glycine degrons are conditionally exposed after a failure of N-myristoylation. In Pongo abelii (Sumatran orangutan), this protein is Protein zer-1 homolog (ZER1).